The sequence spans 602 residues: MKKIRNFAIIAHIDHGKSTLSDRFIQLCGALSSREMVNQVLDSMDIERERGITIKAQSVRLNYKALDSQLYQLNLIDTPGHVDFSYEVSRSLAACEGALLVVDASQGVEAQTLANCYTAIEMNLTVVPVINKIDLASADPNRVLQEIEDIIGIDATDIVFCSAKTGLGISNIIERIVRDIPPPKGDPTAPLQALIIDSWFDNYFGLVSLVRIQNGTLRKGDKVTVMSTGQSYNVERLGFFTPKKIDQEELKCGEVGWLVCSIKNIFGVLVGDTFTLTYQPAQQALPGFKKVKPQVYAGFFPVNANDYQSLNDALGKLRLNDASLFYEIEQSNALGFGFRCGFLGLLHMEIIQERLEREYNLNLITTAPTVIYEVITHDKNTYFIDSPSKLPSIHEIKELREPIAKCTILVPHKYLGKVINLCIEKRGVQKDIFYHGKMVTLTYEIPMAEVVIDFFDRLKSISRGYASLDYEFQFFQTSNVVRVDVLINGDRIDALTIITHRVNALYRGRELVDRLQELIPRQQFDIAIQTAIGNNIIARSTVKQLRKNVLAKCYGGDVSRKKKLLQKQKQGKKRMKLIGKIELPQEAFMSILNVKKKSNKVC.

The tr-type G domain maps to 2 to 184 (KKIRNFAIIA…RIVRDIPPPK (183 aa)). GTP contacts are provided by residues 14–19 (DHGKST) and 131–134 (NKID).

Belongs to the TRAFAC class translation factor GTPase superfamily. Classic translation factor GTPase family. LepA subfamily.

It localises to the cell membrane. It catalyses the reaction GTP + H2O = GDP + phosphate + H(+). Required for accurate and efficient protein synthesis under certain stress conditions. May act as a fidelity factor of the translation reaction, by catalyzing a one-codon backward translocation of tRNAs on improperly translocated ribosomes. Back-translocation proceeds from a post-translocation (POST) complex to a pre-translocation (PRE) complex, thus giving elongation factor G a second chance to translocate the tRNAs correctly. Binds to ribosomes in a GTP-dependent manner. The chain is Elongation factor 4 from Baumannia cicadellinicola subsp. Homalodisca coagulata.